The chain runs to 355 residues: 45 kDa calcium-binding protein (355 aa).

An N-terminal signal peptide occupies residues 1-29 (MASRQAPLCGLAPCCLWLLGVVLLMNASA). A glycan (N-linked (GlcNAc...) asparagine) is linked at Asn33. 2 EF-hand domains span residues 91–126 (KSRRKLMVIFSKVDLNTDRRISAKEMQKWIMQKTAE) and 130–165 (EAVAESRAHFRAVDPDGDGHVSWDEYKVKFLATKGH). The residue at position 92 (Ser92) is a Phosphoserine. Residues Asp104, Asn106, Asp108, Arg110, Glu115, Asp143, Asp145, Asp147, His149, and Glu154 each contribute to the Ca(2+) site. 2 positions are modified to phosphothreonine: Thr186 and Thr210. EF-hand domains are found at residues 226-261 (MLQFMVKEIIRDLDQDGDKKLSLSEFISLPVGTVEN), 271-306 (WVRDRKREFEELIDANHDGIVTMAELEDYMDPMNEF), and 307-342 (SALNEAKQMIAIADENQNHYLEPEEVLKYSEFFTGS). Ca(2+)-binding residues include Asp239, Asp241, Asp243, Lys245, and Glu250. At Thr258 the chain carries Phosphothreonine. Ca(2+)-binding residues include Asp284, Asn286, and Asp288. The residue at position 292 (Thr292) is a Phosphothreonine. Ca(2+)-binding residues include Glu295, Asp320, Asn322, Asn324, Tyr326, and Glu331. The interval 302–355 (PMNEFSALNEAKQMIAIADENQNHYLEPEEVLKYSEFFTGSKLVDYARSVHEEF) is necessary for intracellular retention in Golgi apparatus lumen.

The protein belongs to the CREC family.

The protein resides in the golgi apparatus lumen. May regulate calcium-dependent activities in the endoplasmic reticulum lumen or post-ER compartment. The chain is 45 kDa calcium-binding protein (SDF4) from Bos taurus (Bovine).